The sequence spans 265 residues: MIKWPWKAQEITQNEDWPWDDALAIPLLVNLTAQEQARLIALAERFLQQKRLVALQGFELDSLKSARIALIFCLPILELGIEWLDGFHEVLIYPAPFVVDDEWEDDIGLVHSQRVVQAGQSWQQGPIILNWLDIQDSFDASGFNLIIHEVAHKLDMRNGDRASGIPFIPLRDVAGWEHDLHAAMNNIQDEIDLVGESAASIDAYAATDPAECFAVLSEYFFSAPELFAPRFPALWQRFCQFYRQDPSQRLRVSAAEGDYGEESEH.

His-111, His-148, His-152, and Glu-211 together coordinate Zn(2+).

The protein belongs to the MtfA family. As to quaternary structure, interacts with Mlc. Zn(2+) is required as a cofactor.

The protein resides in the cytoplasm. Involved in the modulation of the activity of the glucose-phosphotransferase system (glucose-PTS). Interacts with the transcriptional repressor Mlc, preventing its interaction with DNA and leading to the modulation of expression of genes regulated by Mlc, including ptsG, which encodes the PTS system glucose-specific EIICB component. Functionally, shows zinc-dependent metallopeptidase activity. In Salmonella gallinarum (strain 287/91 / NCTC 13346), this protein is Mlc titration factor A.